The sequence spans 850 residues: Translation initiation factor IF-2 (850 aa).

Disordered regions lie at residues 50-72 (LKSS…KTTS) and 92-267 (FVQR…TGPV). The segment covering 96–135 (SPEEIQAEQKREQEERRAAENAAREKADADARQRNEEQAR) has biased composition (basic and acidic residues). Residues 136–172 (RQAAQAPAAAPVAKAEPAPAAAAPAAPAVPDAPVSED) show a composition bias toward low complexity. Basic and acidic residues-rich tracts occupy residues 173-210 (AAAR…RGEA) and 234-243 (TTDEESDGFR). The span at 244 to 257 (RGRGGKGKPKKRNQ) shows a compositional bias: basic residues. Residues 350 to 517 (SRAPVVTVMG…AVLLQAEILE (168 aa)) form the tr-type G domain. The interval 359–366 (GHVDHGKT) is G1. 359-366 (GHVDHGKT) serves as a coordination point for GTP. Residues 384–388 (GITQH) are G2. Residues 405 to 408 (DTPG) are G3. GTP is bound by residues 405–409 (DTPGH) and 459–462 (NKID). The segment at 459-462 (NKID) is G4. The segment at 495–497 (SAK) is G5.

Belongs to the TRAFAC class translation factor GTPase superfamily. Classic translation factor GTPase family. IF-2 subfamily.

The protein localises to the cytoplasm. Its function is as follows. One of the essential components for the initiation of protein synthesis. Protects formylmethionyl-tRNA from spontaneous hydrolysis and promotes its binding to the 30S ribosomal subunits. Also involved in the hydrolysis of GTP during the formation of the 70S ribosomal complex. The polypeptide is Translation initiation factor IF-2 (Pseudomonas entomophila (strain L48)).